A 154-amino-acid polypeptide reads, in one-letter code: General odorant-binding protein 83a (154 aa).

A signal peptide spans 1-33; it reads MALNGFGRRVSASVLLIALSLLSGALILPPAAA. 3 disulfide bridges follow: Cys-55–Cys-86, Cys-82–Cys-133, and Cys-124–Cys-142.

This sequence belongs to the PBP/GOBP family. In terms of tissue distribution, in the ventrolateral region of the antenna, expressed in two distinct types of olfactory hairs: in most sensilla trichodea and in a subset of the small sensilla basiconica (at protein level).

Its subcellular location is the secreted. This chain is General odorant-binding protein 83a (Obp83a), found in Drosophila melanogaster (Fruit fly).